The following is a 526-amino-acid chain: Bifunctional purine biosynthesis protein PurH (526 aa).

Positions 1–148 (MQRPIIIRRA…KNYSNVVVVV (148 aa)) constitute an MGS-like domain.

It belongs to the PurH family.

The enzyme catalyses (6R)-10-formyltetrahydrofolate + 5-amino-1-(5-phospho-beta-D-ribosyl)imidazole-4-carboxamide = 5-formamido-1-(5-phospho-D-ribosyl)imidazole-4-carboxamide + (6S)-5,6,7,8-tetrahydrofolate. It carries out the reaction IMP + H2O = 5-formamido-1-(5-phospho-D-ribosyl)imidazole-4-carboxamide. The protein operates within purine metabolism; IMP biosynthesis via de novo pathway; 5-formamido-1-(5-phospho-D-ribosyl)imidazole-4-carboxamide from 5-amino-1-(5-phospho-D-ribosyl)imidazole-4-carboxamide (10-formyl THF route): step 1/1. It participates in purine metabolism; IMP biosynthesis via de novo pathway; IMP from 5-formamido-1-(5-phospho-D-ribosyl)imidazole-4-carboxamide: step 1/1. This is Bifunctional purine biosynthesis protein PurH from Baumannia cicadellinicola subsp. Homalodisca coagulata.